The sequence spans 155 residues: Small ribosomal subunit protein uS7c (155 aa).

Belongs to the universal ribosomal protein uS7 family. Part of the 30S ribosomal subunit.

It is found in the plastid. The protein localises to the chloroplast. In terms of biological role, one of the primary rRNA binding proteins, it binds directly to 16S rRNA where it nucleates assembly of the head domain of the 30S subunit. This is Small ribosomal subunit protein uS7c (rps7) from Spirogyra maxima (Green alga).